The following is a 340-amino-acid chain: uncharacterized protein (340 aa).

Transmembrane regions (helical) follow at residues 162 to 182 (PLVP…VLAG) and 239 to 259 (FWIS…IVVP).

It localises to the cell membrane. This is an uncharacterized protein from Mycobacterium bovis (strain ATCC BAA-935 / AF2122/97).